The primary structure comprises 279 residues: NAD-dependent protein deacylase (279 aa).

The 253-residue stretch at 20 to 272 (RERLRQRIFF…PEFVEKLLKG (253 aa)) folds into the Deacetylase sirtuin-type domain. Residue 48–67 (GAGISAESGIRTFRAADGLW) coordinates NAD(+). Positions 92 and 95 each coordinate substrate. NAD(+) is bound at residue 129–132 (QNID). The Proton acceptor role is filled by His-147. Zn(2+)-binding residues include Cys-155 and Cys-174. NAD(+)-binding positions include 214–216 (GTS), 240–242 (NLE), and Ala-258.

It belongs to the sirtuin family. Class III subfamily. Forms a 1:1 complex with acetyl-CoA synthetase (Acs). It depends on Zn(2+) as a cofactor.

The protein resides in the cytoplasm. The enzyme catalyses N(6)-acetyl-L-lysyl-[protein] + NAD(+) + H2O = 2''-O-acetyl-ADP-D-ribose + nicotinamide + L-lysyl-[protein]. It carries out the reaction N(6)-succinyl-L-lysyl-[protein] + NAD(+) + H2O = 2''-O-succinyl-ADP-D-ribose + nicotinamide + L-lysyl-[protein]. It catalyses the reaction N(6)-(2-hydroxyisobutanoyl)-L-lysyl-[protein] + NAD(+) + H2O = 2''-O-(2-hydroxyisobutanoyl)-ADP-D-ribose + nicotinamide + L-lysyl-[protein]. Its activity is regulated as follows. Deacetylation is inhibited by nicotinamide. Its function is as follows. NAD-dependent lysine deacetylase that specifically removes acetyl groups on target proteins. Also acts as a protein-lysine deacylase by mediating protein desuccinylation and de-2-hydroxyisobutyrylation. Modulates the activities of several proteins which are inactive in their acylated form. Activates the enzyme acetyl-CoA synthetase (acs) by deacetylating 'Lys-609' in the inactive, acetylated form of the enzyme. May also modulate the activity of other propionyl-adenosine monophosphate (AMP)-forming enzymes. The chain is NAD-dependent protein deacylase from Escherichia coli (strain K12).